The primary structure comprises 143 residues: UPF0251 protein CA_C3166 (143 aa).

The protein belongs to the UPF0251 family.

This is UPF0251 protein CA_C3166 from Clostridium acetobutylicum (strain ATCC 824 / DSM 792 / JCM 1419 / IAM 19013 / LMG 5710 / NBRC 13948 / NRRL B-527 / VKM B-1787 / 2291 / W).